A 283-amino-acid polypeptide reads, in one-letter code: MYPSLDDDFVSDLFCFDQSNGAELDDYTQFGVNLQTDQEDTFPDFVSYGVNLQQEPDEVFSIGASQLDLSSYNGVLSLEPEQVGQQDCEVVQEEEVEINSGSSGGAVKEEQEHLDDDCSRKRARTGSCSRGGGTKACRERLRREKLNERFMDLSSVLEPGRTPKTDKPAILDDAIRILNQLRDEALKLEETNQKLLEEIKSLKAEKNELREEKLVLKADKEKTEQQLKSMTAPSSGFIPHIPAAFNHNKMAVYPSYGYMPMWHYMPQSVRDTSRDQELRPPAA.

The disordered stretch occupies residues 96–134 (VEINSGSSGGAVKEEQEHLDDDCSRKRARTGSCSRGGGT). Residues 107–120 (VKEEQEHLDDDCSR) are compositionally biased toward basic and acidic residues. The bHLH domain occupies 130-181 (RGGGTKACRERLRREKLNERFMDLSSVLEPGRTPKTDKPAILDDAIRILNQL).

Homodimer. Interacts with BTS and BHLH47/PYE.

Its subcellular location is the nucleus. The chain is Transcription factor bHLH104 (BHLH104) from Arabidopsis thaliana (Mouse-ear cress).